The chain runs to 67 residues: DNA gyrase inhibitor YacG (67 aa).

Cysteine 9, cysteine 12, cysteine 28, and cysteine 32 together coordinate Zn(2+). A disordered region spans residues 46–67 (RIPSSGDLNDSDDWSEQPLDRQ).

The protein belongs to the DNA gyrase inhibitor YacG family. In terms of assembly, interacts with GyrB. Zn(2+) serves as cofactor.

Its function is as follows. Inhibits all the catalytic activities of DNA gyrase by preventing its interaction with DNA. Acts by binding directly to the C-terminal domain of GyrB, which probably disrupts DNA binding by the gyrase. The chain is DNA gyrase inhibitor YacG from Erwinia tasmaniensis (strain DSM 17950 / CFBP 7177 / CIP 109463 / NCPPB 4357 / Et1/99).